The sequence spans 358 residues: Gibberellin 3-beta-dioxygenase 1 (358 aa).

The 105-residue stretch at 204–308 folds into the Fe2OG dioxygenase domain; it reads DLNWAQAALQ…RLSVAFLWGP (105 aa). Fe cation-binding residues include His232, Asp234, and His289. Arg299 is an active-site residue.

This sequence belongs to the iron/ascorbate-dependent oxidoreductase family. GA3OX subfamily. It depends on L-ascorbate as a cofactor. Requires Fe cation as cofactor. As to expression, expressed in stems, roots, leaves, flowers, and siliques. Highly expressed near the nodes in stems and in the stamen filaments of flowers. Detected in developing cotyledons, vegetative shoot apical meristem and non-meristematic, non-elongation regions of the roots. Found in the cortex and the endodermis of the embryo axis in germinating seeds and in the placenta in developing siliques.

The enzyme catalyses gibberellin A9 + 2-oxoglutarate + O2 = gibberellin A4 + succinate + CO2. It catalyses the reaction gibberellin A20 + 2-oxoglutarate + O2 = gibberellin A1 + succinate + CO2. The protein operates within plant hormone biosynthesis; gibberellin biosynthesis. Its function is as follows. Converts the inactive gibberellin (GA) precursors GA9 and GA20 into the bioactives gibberellins GA4 and GA1, respectively. Involved in the production of bioactive GA for vegetative growth and development. The chain is Gibberellin 3-beta-dioxygenase 1 (GA3OX1) from Arabidopsis thaliana (Mouse-ear cress).